The following is a 255-amino-acid chain: tRNA1(Val) (adenine(37)-N6)-methyltransferase (255 aa).

It belongs to the methyltransferase superfamily. tRNA (adenine-N(6)-)-methyltransferase family.

Its subcellular location is the cytoplasm. The enzyme catalyses adenosine(37) in tRNA1(Val) + S-adenosyl-L-methionine = N(6)-methyladenosine(37) in tRNA1(Val) + S-adenosyl-L-homocysteine + H(+). In terms of biological role, specifically methylates the adenine in position 37 of tRNA(1)(Val) (anticodon cmo5UAC). The polypeptide is tRNA1(Val) (adenine(37)-N6)-methyltransferase (Porphyromonas gingivalis (strain ATCC BAA-308 / W83)).